The primary structure comprises 427 residues: 4-hydroxy-3-methylbut-2-en-1-yl diphosphate synthase (flavodoxin) (427 aa).

Positions 1–21 are disordered; that stretch reads MNKLENTIDSDIAGPAPRHRT. 4 residues coordinate [4Fe-4S] cluster: C310, C313, C356, and E363.

Belongs to the IspG family. [4Fe-4S] cluster serves as cofactor.

The enzyme catalyses (2E)-4-hydroxy-3-methylbut-2-enyl diphosphate + oxidized [flavodoxin] + H2O + 2 H(+) = 2-C-methyl-D-erythritol 2,4-cyclic diphosphate + reduced [flavodoxin]. The protein operates within isoprenoid biosynthesis; isopentenyl diphosphate biosynthesis via DXP pathway; isopentenyl diphosphate from 1-deoxy-D-xylulose 5-phosphate: step 5/6. Converts 2C-methyl-D-erythritol 2,4-cyclodiphosphate (ME-2,4cPP) into 1-hydroxy-2-methyl-2-(E)-butenyl 4-diphosphate. The sequence is that of 4-hydroxy-3-methylbut-2-en-1-yl diphosphate synthase (flavodoxin) from Bradyrhizobium diazoefficiens (strain JCM 10833 / BCRC 13528 / IAM 13628 / NBRC 14792 / USDA 110).